Here is a 150-residue protein sequence, read N- to C-terminus: Large ribosomal subunit protein uL13 (150 aa).

Belongs to the universal ribosomal protein uL13 family. As to quaternary structure, part of the 50S ribosomal subunit.

This protein is one of the early assembly proteins of the 50S ribosomal subunit, although it is not seen to bind rRNA by itself. It is important during the early stages of 50S assembly. This is Large ribosomal subunit protein uL13 from Chlamydia caviae (strain ATCC VR-813 / DSM 19441 / 03DC25 / GPIC) (Chlamydophila caviae).